Here is a 345-residue protein sequence, read N- to C-terminus: D-alanine--D-alanine ligase (345 aa).

The 200-residue stretch at 133-332 (KWLCHARGVK…LPHTKRAKVT (200 aa)) folds into the ATP-grasp domain. Residue 160–211 (AYPIIVKPSRLGSSIGVSIVKDESKLDYALDSAFEFDNTVIVEPFLEGVKEY) coordinates ATP. 3 residues coordinate Mg(2+): aspartate 284, glutamate 296, and asparagine 298.

The protein belongs to the D-alanine--D-alanine ligase family. The cofactor is Mg(2+). It depends on Mn(2+) as a cofactor.

The protein resides in the cytoplasm. The catalysed reaction is 2 D-alanine + ATP = D-alanyl-D-alanine + ADP + phosphate + H(+). Its pathway is cell wall biogenesis; peptidoglycan biosynthesis. Cell wall formation. The polypeptide is D-alanine--D-alanine ligase (Sulfurimonas denitrificans (strain ATCC 33889 / DSM 1251) (Thiomicrospira denitrificans (strain ATCC 33889 / DSM 1251))).